The primary structure comprises 245 residues: 3-deoxy-manno-octulosonate cytidylyltransferase (245 aa).

This sequence belongs to the KdsB family.

The protein localises to the cytoplasm. The enzyme catalyses 3-deoxy-alpha-D-manno-oct-2-ulosonate + CTP = CMP-3-deoxy-beta-D-manno-octulosonate + diphosphate. It functions in the pathway nucleotide-sugar biosynthesis; CMP-3-deoxy-D-manno-octulosonate biosynthesis; CMP-3-deoxy-D-manno-octulosonate from 3-deoxy-D-manno-octulosonate and CTP: step 1/1. The protein operates within bacterial outer membrane biogenesis; lipopolysaccharide biosynthesis. Its function is as follows. Activates KDO (a required 8-carbon sugar) for incorporation into bacterial lipopolysaccharide in Gram-negative bacteria. The polypeptide is 3-deoxy-manno-octulosonate cytidylyltransferase (Desulfatibacillum aliphaticivorans).